The following is a 274-amino-acid chain: Kit ligand (274 aa).

Residues 1–25 (MKKTQTWIVTCIYLQLLLFNPLVKT) form the signal peptide. Over 26-215 (KGLCRNRVTD…TNPIEDSSIQ (190 aa)) the chain is Extracellular. 2 cysteine pairs are disulfide-bonded: C29–C114 and C68–C164. N-linked (GlcNAc...) asparagine glycosylation is found at N90, N97, N145, and N196. Residues 216-238 (WAVMALPACFSLVIGFAFGAFYW) traverse the membrane as a helical segment. Residues 239-274 (KKKQPNLTRTVENIQINEEDNEISMLQEKEREFQEV) lie on the Cytoplasmic side of the membrane.

This sequence belongs to the SCF family. As to quaternary structure, homodimer, non-covalently linked. Post-translationally, a soluble form is produced by proteolytic processing of isoform 1 in the extracellular domain.

It localises to the cell membrane. Its subcellular location is the secreted. It is found in the cytoplasm. The protein localises to the cytoskeleton. The protein resides in the cell projection. It localises to the lamellipodium. Its subcellular location is the filopodium. Stimulates the proliferation of mast cells. Able to augment the proliferation of both myeloid and lymphoid hematopoietic progenitors in bone marrow culture. Also mediates cell-cell adhesion. Acts synergistically with other cytokines, probably interleukins. This chain is Kit ligand (KITLG), found in Felis catus (Cat).